A 292-amino-acid polypeptide reads, in one-letter code: Beta-lactamase-like protein 2 homolog (292 aa).

H76, H78, D80, H81, H145, D163, and H198 together coordinate Zn(2+).

Belongs to the metallo-beta-lactamase superfamily. Glyoxalase II family.

The polypeptide is Beta-lactamase-like protein 2 homolog (Drosophila melanogaster (Fruit fly)).